A 282-amino-acid polypeptide reads, in one-letter code: HTH-type transcriptional activator RhaR (282 aa).

Residues Asp-179 to Leu-277 enclose the HTH araC/xylS-type domain. DNA-binding regions (H-T-H motif) lie at residues Asp-196–Thr-217 and Val-244–Thr-267.

As to quaternary structure, binds DNA as a dimer.

The protein resides in the cytoplasm. Functionally, activates expression of the rhaSR operon in response to L-rhamnose. This chain is HTH-type transcriptional activator RhaR, found in Salmonella typhi.